The primary structure comprises 738 residues: Protein ALEX (738 aa).

6 disordered regions span residues 1-105 (MSPS…EEAM), 155-188 (REDY…ASHA), 237-350 (TTFP…LPKP), 387-516 (MSGQ…LGQP), 528-578 (GEPG…LDPP), and 611-689 (GMRL…RPRI). The segment covering 257 to 273 (GSTTTPLSIWTAPQSQV) has biased composition (polar residues). Residues 279-301 (KSREPQLRASTQRDPHLSDKQPR) show a composition bias toward basic and acidic residues. Residues 387 to 396 (MSGQNQTEGQ) are compositionally biased toward polar residues. Pro residues-rich tracts occupy residues 410–438 (QPPP…PPSQ), 448–467 (PSLP…PRQP), and 476–485 (PGQPPSPLRS). 3 stretches are compositionally biased toward low complexity: residues 542–564 (PSLP…LPAG), 615–626 (RPASARSSPPAM), and 656–671 (ATRS…EAAS).

Belongs to the ALEX family. Interacts with the N-terminal region of the XLas isoforms of guanine nucleotide-binding protein G(s) subunit alpha.

The protein resides in the cell membrane. Its subcellular location is the cell projection. It localises to the ruffle. Its function is as follows. May inhibit the adenylyl cyclase-stimulating activity of guanine nucleotide-binding protein G(s) subunit alpha which is produced from the same locus in a different open reading frame. In Rattus norvegicus (Rat), this protein is Protein ALEX.